The chain runs to 1271 residues: Protein flightless-1 homolog (1271 aa).

An N-acetylmethionine modification is found at M1. Positions 1–427 (MEATGVLPFV…SGSKDPLARK (427 aa)) are interaction with LRRFIP1 and LRRFIP2. 16 LRR repeats span residues 7 to 32 (LPFV…VKAM), 33 to 55 (TSLR…LAAL), 56 to 78 (QKLE…LSSL), 80 to 103 (SLRA…IFKL), 104 to 126 (DDLS…LENA), 127 to 149 (KNML…LFIN), 150 to 173 (LTDL…MRRL), 175 to 196 (HLQT…QLPA), 197 to 222 (MMAL…LEGL), 223 to 245 (SNLS…LYTL), 247 to 268 (SLRR…IDQW), 269 to 291 (VHLE…ICKL), 293 to 316 (KLKK…IGKL), 317 to 339 (TSLE…LCRC), 340 to 363 (PKLK…HFLT), and 365 to 385 (IQVL…PADR). The residue at position 21 (K21) is an N6-acetyllysine. S406 is subject to Phosphoserine. Residue S436 is modified to Phosphoserine; by SGK3. Positions 495-827 (VGQLPGLTIW…VVSRSLEGTE (333 aa)) are interaction with ACTL6A. Gelsolin-like repeat units lie at residues 509–591 (FVPV…EEFL), 629–703 (NIKL…PGFW), and 759–831 (LMPG…AQVF). The residue at position 860 (S860) is a Phosphoserine. A disordered region spans residues 951–977 (KTEDKEGKASAEAREGEEAAAEAEEKQ). Over residues 952–967 (TEDKEGKASAEAREGE) the composition is skewed to basic and acidic residues. The span at 968–977 (EAAAEAEEKQ) shows a compositional bias: acidic residues. A Gelsolin-like 4 repeat occupies 1183–1256 (KCSDFCQDDL…VRKGNEQRAF (74 aa)).

In terms of assembly, interacts with actin, ACTL6A and NCOA2. Interacts with CARM1. Interacts with LRRFIP1, LRRFIP2 and MYD88. Upon LPS stimulation, LRRFIP2 competes for MYD88-binding; LRRFIP1 constitutively blocks the interaction with MyD88, even in the absence of LPS. Interacts with the nuclear receptors ESR1 and THRB. Interacts with SGK3. Interacts (via the gelsolin-like region) with TMOD1 and TMOD3. Interacts with LMOD2, VCL, GSN and DES. In terms of tissue distribution, expressed in blastocyst.

It is found in the nucleus. It localises to the cytoplasm. Its subcellular location is the cytoskeleton. The protein resides in the microtubule organizing center. The protein localises to the centrosome. It is found in the cell junction. It localises to the focal adhesion. Its subcellular location is the cell projection. The protein resides in the podosome. Is a regulator of actin polymerization, required for proper myofibril organization and regulation of the length of sarcomeric thin filaments. It also plays a role in the assembly of cardiomyocyte cell adhesion complexes. Regulates cytoskeletal rearrangements involved in cytokinesis and cell migration, by inhibiting Rac1-dependent paxillin phosphorylation. May play a role as coactivator in transcriptional activation by hormone-activated nuclear receptors (NR) and acts in cooperation with NCOA2 and CARM1. Involved in estrogen hormone signaling. In Mus musculus (Mouse), this protein is Protein flightless-1 homolog (Flii).